A 234-amino-acid chain; its full sequence is MKITWYGHSAFRIEAGGAKILIDPFLSGNPTWKEGWEGPAEGVTHVLLTHGHGDHLGDTLDILKKTGAMLVANAEISSYYGAQGVEGSRINPGNHGGTVDCGGFTTTFVNALHSSSFTKDGSNIYLGNPHGLVLHFPSDKTVYHMGDTDIFGDMALIEELHQPQIGLVPIGDRYTMGGAVAALACRRFFRFEAVIPCHYGTFPIIDQTAEKFIEGMEGAETKVLTPPPGQEVDL.

Belongs to the UPF0173 family.

In Chelativorans sp. (strain BNC1), this protein is UPF0173 metal-dependent hydrolase Meso_1362.